The chain runs to 480 residues: Glutamate--tRNA ligase (480 aa).

The 'HIGH' region signature appears at 12–22 (PSPTGAPHLGL). The short motif at 255 to 259 (KLSKR) is the 'KMSKS' region element. Lysine 258 is a binding site for ATP.

The protein belongs to the class-I aminoacyl-tRNA synthetase family. Glutamate--tRNA ligase type 1 subfamily. In terms of assembly, monomer.

It is found in the cytoplasm. It catalyses the reaction tRNA(Glu) + L-glutamate + ATP = L-glutamyl-tRNA(Glu) + AMP + diphosphate. In terms of biological role, catalyzes the attachment of glutamate to tRNA(Glu) in a two-step reaction: glutamate is first activated by ATP to form Glu-AMP and then transferred to the acceptor end of tRNA(Glu). This is Glutamate--tRNA ligase from Tropheryma whipplei (strain TW08/27) (Whipple's bacillus).